A 400-amino-acid chain; its full sequence is Acetate kinase (400 aa).

Residue Asn10 participates in Mg(2+) binding. Lys17 contacts ATP. Residue Arg91 coordinates substrate. Asp150 functions as the Proton donor/acceptor in the catalytic mechanism. Residues 210–214 (HLGNG), 285–287 (DCR), and 333–337 (GIGEN) contribute to the ATP site. Residue Glu387 participates in Mg(2+) binding.

Belongs to the acetokinase family. As to quaternary structure, homodimer. Mg(2+) serves as cofactor. Requires Mn(2+) as cofactor.

Its subcellular location is the cytoplasm. The catalysed reaction is acetate + ATP = acetyl phosphate + ADP. It participates in metabolic intermediate biosynthesis; acetyl-CoA biosynthesis; acetyl-CoA from acetate: step 1/2. In terms of biological role, catalyzes the formation of acetyl phosphate from acetate and ATP. Can also catalyze the reverse reaction. This is Acetate kinase from Salmonella typhi.